Reading from the N-terminus, the 327-residue chain is tRNA N6-adenosine threonylcarbamoyltransferase (327 aa).

Fe cation contacts are provided by H109 and H113. Substrate contacts are provided by residues 132 to 136 (MVSGG), D165, G178, D182, and N268. Fe cation is bound at residue D296.

This sequence belongs to the KAE1 / TsaD family. It depends on Fe(2+) as a cofactor.

The protein resides in the cytoplasm. It catalyses the reaction L-threonylcarbamoyladenylate + adenosine(37) in tRNA = N(6)-L-threonylcarbamoyladenosine(37) in tRNA + AMP + H(+). In terms of biological role, required for the formation of a threonylcarbamoyl group on adenosine at position 37 (t(6)A37) in tRNAs that read codons beginning with adenine. Is involved in the transfer of the threonylcarbamoyl moiety of threonylcarbamoyl-AMP (TC-AMP) to the N6 group of A37, together with TsaE and TsaB. TsaD likely plays a direct catalytic role in this reaction. This chain is tRNA N6-adenosine threonylcarbamoyltransferase, found in Thermotoga neapolitana (strain ATCC 49049 / DSM 4359 / NBRC 107923 / NS-E).